A 93-amino-acid chain; its full sequence is Toxin RelE1 (93 aa).

This sequence belongs to the RelE toxin family.

Toxic component of a type II toxin-antitoxin (TA) system. Its toxic effect is neutralized by coexpression with cognate antitoxin RelB1 but no other ParD or RelB antitoxin. This Caulobacter vibrioides (strain ATCC 19089 / CIP 103742 / CB 15) (Caulobacter crescentus) protein is Toxin RelE1 (relE1).